Consider the following 248-residue polypeptide: Ribosomal RNA small subunit methyltransferase J (248 aa).

Residues 97–98 (RD), 113–114 (ER), and Asp-167 contribute to the S-adenosyl-L-methionine site.

The protein belongs to the methyltransferase superfamily. RsmJ family.

The protein resides in the cytoplasm. The enzyme catalyses guanosine(1516) in 16S rRNA + S-adenosyl-L-methionine = N(2)-methylguanosine(1516) in 16S rRNA + S-adenosyl-L-homocysteine + H(+). Its function is as follows. Specifically methylates the guanosine in position 1516 of 16S rRNA. This Aeromonas hydrophila subsp. hydrophila (strain ATCC 7966 / DSM 30187 / BCRC 13018 / CCUG 14551 / JCM 1027 / KCTC 2358 / NCIMB 9240 / NCTC 8049) protein is Ribosomal RNA small subunit methyltransferase J.